The primary structure comprises 278 residues: Shikimate dehydrogenase (NADP(+)) (278 aa).

Shikimate contacts are provided by residues 19 to 21 (SFS) and threonine 66. Lysine 70 serves as the catalytic Proton acceptor. Shikimate contacts are provided by asparagine 91 and aspartate 106. Residues 130-134 (GSGGA) and leucine 222 each bind NADP(+). Shikimate is bound at residue tyrosine 224. Glycine 245 serves as a coordination point for NADP(+).

It belongs to the shikimate dehydrogenase family. As to quaternary structure, homodimer.

It carries out the reaction shikimate + NADP(+) = 3-dehydroshikimate + NADPH + H(+). Its pathway is metabolic intermediate biosynthesis; chorismate biosynthesis; chorismate from D-erythrose 4-phosphate and phosphoenolpyruvate: step 4/7. Involved in the biosynthesis of the chorismate, which leads to the biosynthesis of aromatic amino acids. Catalyzes the reversible NADPH linked reduction of 3-dehydroshikimate (DHSA) to yield shikimate (SA). This chain is Shikimate dehydrogenase (NADP(+)), found in Methanococcus maripaludis (strain DSM 14266 / JCM 13030 / NBRC 101832 / S2 / LL).